We begin with the raw amino-acid sequence, 219 residues long: Ribose-5-phosphate isomerase A (219 aa).

Residues 28 to 31 (TGST), 81 to 84 (DGAD), and 94 to 97 (KGGG) contribute to the substrate site. Glutamate 103 acts as the Proton acceptor in catalysis. A substrate-binding site is contributed by lysine 121.

It belongs to the ribose 5-phosphate isomerase family. Homodimer.

It catalyses the reaction aldehydo-D-ribose 5-phosphate = D-ribulose 5-phosphate. The protein operates within carbohydrate degradation; pentose phosphate pathway; D-ribose 5-phosphate from D-ribulose 5-phosphate (non-oxidative stage): step 1/1. Catalyzes the reversible conversion of ribose-5-phosphate to ribulose 5-phosphate. In Edwardsiella ictaluri (strain 93-146), this protein is Ribose-5-phosphate isomerase A.